A 118-amino-acid polypeptide reads, in one-letter code: Large ribosomal subunit protein bL20 (118 aa).

This sequence belongs to the bacterial ribosomal protein bL20 family.

Its function is as follows. Binds directly to 23S ribosomal RNA and is necessary for the in vitro assembly process of the 50S ribosomal subunit. It is not involved in the protein synthesizing functions of that subunit. This is Large ribosomal subunit protein bL20 from Campylobacter curvus (strain 525.92).